A 256-amino-acid polypeptide reads, in one-letter code: DNA repair protein RecO (256 aa).

Belongs to the RecO family.

In terms of biological role, involved in DNA repair and RecF pathway recombination. The polypeptide is DNA repair protein RecO (Desulforamulus reducens (strain ATCC BAA-1160 / DSM 100696 / MI-1) (Desulfotomaculum reducens)).